Consider the following 308-residue polypeptide: uncharacterized protein (308 aa).

Residues 1-28 (MILMKKFEIILFLFIAVLIFVFGYFVGA) form the signal peptide.

This is an uncharacterized protein from Methanocaldococcus jannaschii (strain ATCC 43067 / DSM 2661 / JAL-1 / JCM 10045 / NBRC 100440) (Methanococcus jannaschii).